The chain runs to 667 residues: tRNA 5-methylaminomethyl-2-thiouridine biosynthesis bifunctional protein MnmC (667 aa).

The tRNA (mnm(5)s(2)U34)-methyltransferase stretch occupies residues Met-1 to Ala-241. The tract at residues Val-268–Val-667 is FAD-dependent cmnm(5)s(2)U34 oxidoreductase.

It in the N-terminal section; belongs to the methyltransferase superfamily. tRNA (mnm(5)s(2)U34)-methyltransferase family. The protein in the C-terminal section; belongs to the DAO family. Requires FAD as cofactor.

It localises to the cytoplasm. The catalysed reaction is 5-aminomethyl-2-thiouridine(34) in tRNA + S-adenosyl-L-methionine = 5-methylaminomethyl-2-thiouridine(34) in tRNA + S-adenosyl-L-homocysteine + H(+). Catalyzes the last two steps in the biosynthesis of 5-methylaminomethyl-2-thiouridine (mnm(5)s(2)U) at the wobble position (U34) in tRNA. Catalyzes the FAD-dependent demodification of cmnm(5)s(2)U34 to nm(5)s(2)U34, followed by the transfer of a methyl group from S-adenosyl-L-methionine to nm(5)s(2)U34, to form mnm(5)s(2)U34. In Haemophilus ducreyi (strain 35000HP / ATCC 700724), this protein is tRNA 5-methylaminomethyl-2-thiouridine biosynthesis bifunctional protein MnmC.